We begin with the raw amino-acid sequence, 283 residues long: 2-dehydro-3-deoxyphosphooctonate aldolase (283 aa).

It belongs to the KdsA family.

The protein resides in the cytoplasm. It carries out the reaction D-arabinose 5-phosphate + phosphoenolpyruvate + H2O = 3-deoxy-alpha-D-manno-2-octulosonate-8-phosphate + phosphate. Its pathway is carbohydrate biosynthesis; 3-deoxy-D-manno-octulosonate biosynthesis; 3-deoxy-D-manno-octulosonate from D-ribulose 5-phosphate: step 2/3. It functions in the pathway bacterial outer membrane biogenesis; lipopolysaccharide biosynthesis. The protein is 2-dehydro-3-deoxyphosphooctonate aldolase of Synechococcus sp. (strain WH7803).